The primary structure comprises 222 residues: Cytochrome b6 (222 aa).

The helical transmembrane segment at 39-59 threads the bilayer; sequence IFYCLGGLTLTCFLIQFATGF. Tyr41 is a heme b binding site. Cys42 serves as a coordination point for heme c. Residues Arg90, His93, Arg94, His107, and Arg110 each contribute to the heme b site. A run of 3 helical transmembrane segments spans residues 97 to 117, 123 to 143, and 193 to 213; these read ASMM…TGGF, LTWV…VTGY, and LHTF…FLMI. Heme b is bound by residues His194 and His209. Heme c-binding residues include Arg214 and Ile218. Residue Ser219 coordinates heme b.

Belongs to the cytochrome b family. PetB subfamily. The 4 large subunits of the cytochrome b6-f complex are cytochrome b6, subunit IV (17 kDa polypeptide, PetD), cytochrome f and the Rieske protein, while the 4 small subunits are PetG, PetL, PetM and PetN. The complex functions as a dimer. Requires heme b as cofactor. Heme c serves as cofactor.

It localises to the cellular thylakoid membrane. Component of the cytochrome b6-f complex, which mediates electron transfer between photosystem II (PSII) and photosystem I (PSI), cyclic electron flow around PSI, and state transitions. This Synechocystis sp. (strain ATCC 27184 / PCC 6803 / Kazusa) protein is Cytochrome b6.